The sequence spans 1073 residues: Pharyngeal muscle protein 2 (1073 aa).

An SAP domain is found at 9 to 43 (INDLRVSELKTELEKRGLSTQGVKVVLTVRLNKAL). Disordered regions lie at residues 59 to 186 (VSPM…PEVV), 207 to 305 (ELKE…SMET), and 337 to 388 (LLED…KSML). Acidic residues predominate over residues 91-111 (EGNDENVLVEEKEEEEEEEDS). Residues 112–127 (HDLQIIEDHELEVPSD) show a composition bias toward basic and acidic residues. Over residues 128-151 (EKDDTLVEDEEFEEAEQVEPEPEA) the composition is skewed to acidic residues. 2 stretches are compositionally biased toward basic and acidic residues: residues 156 to 182 (VEEK…KPVE) and 207 to 217 (ELKEKPEKEPE). Acidic residues-rich tracts occupy residues 223–232 (EPVEQLENEP) and 248–265 (QDGE…DIEI). Residues 277–293 (AEEKVEKKEKKPEEIPH) are compositionally biased toward basic and acidic residues. A compositionally biased stretch (low complexity) spans 366–386 (ASTPQATPSKAASSSAGSGKS). The RRM domain occupies 396–478 (TSIWIRGMTP…RVLRVEKVSE (83 aa)). 3 disordered regions span residues 481–759 (LTSS…ERRR), 845–917 (QEHR…RNLV), and 1015–1073 (SQNA…RGNY). Low complexity-rich tracts occupy residues 496–505 (EAASTMSTSP) and 513–524 (PVVTTTTTTSAA). Positions 573 to 587 (ITFDREEESNRDSRR) are enriched in basic and acidic residues. Over residues 588–622 (TIAAAPPARTSRMARSPLRAPLRAARGSESSRSST) the composition is skewed to low complexity. A compositionally biased stretch (polar residues) spans 674–689 (VTVQQDAPRASYQTEQ). Basic and acidic residues-rich tracts occupy residues 707 to 727 (VSPD…RRAP) and 742 to 759 (PPRR…ERRR). 3 stretches are compositionally biased toward low complexity: residues 901 to 917 (SSSN…RNLV), 1015 to 1026 (SQNAATPSTSTS), and 1034 to 1060 (QWQQ…SSSN).

In terms of tissue distribution, expressed in most tissues including the hypodermal, muscle, neuronal, vulval and intestinal tissues. Isoform a: Expressed in the pharynx, nerve ring, intestine, neurons and ventral nerve cord.

The protein localises to the nucleus. Its function is as follows. Involved in pharyngeal muscle development and ensures pharyngeal grinder function during feeding. Plays a role in the defense against the accumulation of ingested live pathogenic bacteria in the intestine. Has a role in the determination of life span. The protein is Pharyngeal muscle protein 2 of Caenorhabditis elegans.